The primary structure comprises 87 residues: Small ribosomal subunit protein uS19 (87 aa).

This sequence belongs to the universal ribosomal protein uS19 family.

Functionally, protein S19 forms a complex with S13 that binds strongly to the 16S ribosomal RNA. The chain is Small ribosomal subunit protein uS19 (rpsS) from Mycoplasma pneumoniae (strain ATCC 29342 / M129 / Subtype 1) (Mycoplasmoides pneumoniae).